The primary structure comprises 363 residues: Glutamate--cysteine ligase (363 aa).

Belongs to the glutamate--cysteine ligase type 2 family. YbdK subfamily.

The enzyme catalyses L-cysteine + L-glutamate + ATP = gamma-L-glutamyl-L-cysteine + ADP + phosphate + H(+). Functionally, catalyzes the synthesis of gamma-glutamylcysteine (gamma-GC), the main low-molecular-weight thiol compound instead of glutathione in halophilic archaea. This Haloquadratum walsbyi (strain DSM 16790 / HBSQ001) protein is Glutamate--cysteine ligase.